Consider the following 177-residue polypeptide: ATP synthase subunit delta (177 aa).

It belongs to the ATPase delta chain family. As to quaternary structure, F-type ATPases have 2 components, F(1) - the catalytic core - and F(0) - the membrane proton channel. F(1) has five subunits: alpha(3), beta(3), gamma(1), delta(1), epsilon(1). F(0) has three main subunits: a(1), b(2) and c(10-14). The alpha and beta chains form an alternating ring which encloses part of the gamma chain. F(1) is attached to F(0) by a central stalk formed by the gamma and epsilon chains, while a peripheral stalk is formed by the delta and b chains.

Its subcellular location is the cell inner membrane. Its function is as follows. F(1)F(0) ATP synthase produces ATP from ADP in the presence of a proton or sodium gradient. F-type ATPases consist of two structural domains, F(1) containing the extramembraneous catalytic core and F(0) containing the membrane proton channel, linked together by a central stalk and a peripheral stalk. During catalysis, ATP synthesis in the catalytic domain of F(1) is coupled via a rotary mechanism of the central stalk subunits to proton translocation. In terms of biological role, this protein is part of the stalk that links CF(0) to CF(1). It either transmits conformational changes from CF(0) to CF(1) or is implicated in proton conduction. This Shewanella putrefaciens (strain CN-32 / ATCC BAA-453) protein is ATP synthase subunit delta.